We begin with the raw amino-acid sequence, 120 residues long: uncharacterized protein (120 aa).

The first 18 residues, Met1–Ala18, serve as a signal peptide directing secretion. The segment at Ala20–Leu99 is disordered.

This is an uncharacterized protein from Caenorhabditis elegans.